We begin with the raw amino-acid sequence, 190 residues long: Elongation factor P-like protein (190 aa).

Belongs to the elongation factor P family.

The chain is Elongation factor P-like protein from Photorhabdus laumondii subsp. laumondii (strain DSM 15139 / CIP 105565 / TT01) (Photorhabdus luminescens subsp. laumondii).